A 177-amino-acid chain; its full sequence is Putative zinc finger protein 826 (177 aa).

A C2H2-type 1; degenerate zinc finger spans residues 99–114 (KTFTWSSSPHKHRRTH). A C2H2-type 2; degenerate zinc finger spans residues 120–142 (YKCEECGKAFTASSTLSEYKTIH). Residues 148–170 (CKCEECGKAFNWSSDFNKHKRIH) form a C2H2-type 3 zinc finger.

It is found in the nucleus. In terms of biological role, may be involved in transcriptional regulation. The sequence is that of Putative zinc finger protein 826 (ZNF826P) from Homo sapiens (Human).